The chain runs to 88 residues: Alpha-latrotoxin associated low molecular weight protein 2 (88 aa).

Residues 1–19 (MLKLICIAFLVTVLTLVAG) form the signal peptide. 3 disulfides stabilise this stretch: C30-C66, C46-C62, and C49-C75.

Belongs to the arthropod CHH/MIH/GIH/VIH hormone family. As to expression, expressed by the venom gland.

The protein localises to the secreted. Functionally, may increase the toxicity of alpha-latrotoxin and/or other venom components. Is non-toxic to mice and to the cockroach Periplaneta americana. The protein is Alpha-latrotoxin associated low molecular weight protein 2 of Latrodectus hesperus (Western black widow spider).